We begin with the raw amino-acid sequence, 729 residues long: Adenosylcobalamin-dependent ribonucleoside-triphosphate reductase (729 aa).

Residues Cys189 and Cys438 are joined by a disulfide bond. Catalysis depends on residues Cys427 and Glu429.

The protein belongs to the class II ribonucleoside-triphosphate reductase family. In terms of assembly, monomer. Adenosylcob(III)alamin serves as cofactor.

The enzyme catalyses a 2'-deoxyribonucleoside 5'-triphosphate + [thioredoxin]-disulfide + H2O = a ribonucleoside 5'-triphosphate + [thioredoxin]-dithiol. The polypeptide is Adenosylcobalamin-dependent ribonucleoside-triphosphate reductase (rnr) (Euglena gracilis).